The sequence spans 421 residues: Tyrosine--tRNA ligase (421 aa).

Y42 contributes to the L-tyrosine binding site. Residues 47 to 56 (CTAPSLHVGS) carry the 'HIGH' region motif. Residues Y179 and Q183 each coordinate L-tyrosine. The 'KMSKS' region signature appears at 239–243 (KMGKT). Residue K242 participates in ATP binding. Residues 354–419 (LGILAAFAKA…RKKHVLLRLA (66 aa)) enclose the S4 RNA-binding domain.

This sequence belongs to the class-I aminoacyl-tRNA synthetase family. TyrS type 1 subfamily. In terms of assembly, homodimer.

It localises to the cytoplasm. The catalysed reaction is tRNA(Tyr) + L-tyrosine + ATP = L-tyrosyl-tRNA(Tyr) + AMP + diphosphate + H(+). Its function is as follows. Catalyzes the attachment of tyrosine to tRNA(Tyr) in a two-step reaction: tyrosine is first activated by ATP to form Tyr-AMP and then transferred to the acceptor end of tRNA(Tyr). The sequence is that of Tyrosine--tRNA ligase from Beijerinckia indica subsp. indica (strain ATCC 9039 / DSM 1715 / NCIMB 8712).